A 341-amino-acid chain; its full sequence is ATPase GET3 (341 aa).

34–41 (KGGVGKTT) serves as a coordination point for ATP. The active site involves Asp63. ATP-binding residues include Glu245 and Asn272. Positions 283 and 286 each coordinate Zn(2+).

This sequence belongs to the arsA ATPase family. Homodimer.

It localises to the cytoplasm. Its subcellular location is the endoplasmic reticulum. ATPase required for the post-translational delivery of tail-anchored (TA) proteins to the endoplasmic reticulum. Recognizes and selectively binds the transmembrane domain of TA proteins in the cytosol. This complex then targets to the endoplasmic reticulum by membrane-bound receptors, where the tail-anchored protein is released for insertion. This process is regulated by ATP binding and hydrolysis. ATP binding drives the homodimer towards the closed dimer state, facilitating recognition of newly synthesized TA membrane proteins. ATP hydrolysis is required for insertion. Subsequently, the homodimer reverts towards the open dimer state, lowering its affinity for the membrane-bound receptor, and returning it to the cytosol to initiate a new round of targeting. This Paracoccidioides brasiliensis (strain Pb18) protein is ATPase GET3.